Reading from the N-terminus, the 179-residue chain is MSEEKLTQDPTAEEEQTETADQQESADVNWEQEAAHWKAQAEEHQNRMLRTMADMENLRRRVRKEQEDLAKYASQKVVEELLPILDNFERALAADKESMTVESLLTGVDMVYRQMVQVFDKEGLVAIAAKGQPFDPHVHQAVMQTQDPAFESGVVVEELQKGYMFKDRVVRPAMVKVNE.

The segment at 1–45 (MSEEKLTQDPTAEEEQTETADQQESADVNWEQEAAHWKAQAEEHQ) is disordered. The segment covering 33-45 (EAAHWKAQAEEHQ) has biased composition (basic and acidic residues).

Belongs to the GrpE family. Homodimer.

The protein localises to the cytoplasm. Functionally, participates actively in the response to hyperosmotic and heat shock by preventing the aggregation of stress-denatured proteins, in association with DnaK and GrpE. It is the nucleotide exchange factor for DnaK and may function as a thermosensor. Unfolded proteins bind initially to DnaJ; upon interaction with the DnaJ-bound protein, DnaK hydrolyzes its bound ATP, resulting in the formation of a stable complex. GrpE releases ADP from DnaK; ATP binding to DnaK triggers the release of the substrate protein, thus completing the reaction cycle. Several rounds of ATP-dependent interactions between DnaJ, DnaK and GrpE are required for fully efficient folding. The polypeptide is Protein GrpE (Brevibacillus choshinensis).